The chain runs to 970 residues: Protein bicaudal C homolog 1-B (970 aa).

Residues 1 to 50 (MAAQCGGYMNQSDPGSNSERSADSPLPGSEDDSPGSAAPHDPEWREERFR) form a disordered region. Positions 9–19 (MNQSDPGSNSE) are enriched in polar residues. Over residues 40–50 (HDPEWREERFR) the composition is skewed to basic and acidic residues. 2 consecutive KH domains span residues 130–197 (RVTL…RVRI) and 282–346 (PVST…RQYL). Positions 596 to 605 (EASRQSNNHS) are enriched in polar residues. Disordered regions lie at residues 596–638 (EASR…SANT), 677–696 (SDSE…APGS), and 773–841 (RRAN…NKSA). Basic and acidic residues predominate over residues 606–616 (SAEEVNSKTDS). 2 stretches are compositionally biased toward polar residues: residues 783–810 (TMST…GSDS) and 819–831 (IDSS…SSIG). The 64-residue stretch at 869 to 932 (FKGSDLPELF…LLAISELNKN (64 aa)) folds into the SAM domain.

It belongs to the BicC family.

Functionally, putative RNA-binding protein. May be involved in regulating gene expression during embryonic development. Seems to be involved in endoderm formation. Ectopic expression results in endoderm formation in the absence of mesoderm induction. The protein is Protein bicaudal C homolog 1-B (bicc1-b) of Xenopus laevis (African clawed frog).